A 484-amino-acid chain; its full sequence is TPR repeat-containing protein YvcD (484 aa).

3 TPR repeats span residues 21-54, 55-88, and 187-220; these read GQYF…EPED, SEML…LEAE, and WSAY…NEGN.

The chain is TPR repeat-containing protein YvcD (yvcD) from Bacillus subtilis (strain 168).